A 759-amino-acid polypeptide reads, in one-letter code: ARF GTPase-activating protein GIT2 (759 aa).

An Arf-GAP domain is found at 1–124 (MSKRLRSSEV…AFVHRLPCRD (124 aa)). The C4-type zinc finger occupies 11-34 (CADCSGPDPSWASVNRGTFLCDEC). ANK repeat units follow at residues 132–161 (DLSK…QANF), 166–195 (KGNT…DPGT), and 199–228 (SGKT…ELTD). The disordered stretch occupies residues 379 to 422 (QHSVESQDNDQPDYDSVASDEDTDLETTASKTNRQKSLDSDLSD). Positions 385–403 (QDNDQPDYDSVASDEDTDL) are enriched in acidic residues. A phosphoserine mark is found at serine 394 and serine 397. The residue at position 401 (threonine 401) is a Phosphothreonine. Residues serine 415, serine 418, and serine 421 each carry the phosphoserine modification. Residues 437-478 (LVASEAKIQQLMKVNNNLSDELRIMQKKLQTLQSENSNLRKQ) adopt a coiled-coil conformation. Over residues 480–499 (TTNVYQVQTGSEYTDTSNHS) the composition is skewed to polar residues. Disordered stretches follow at residues 480-538 (TTNV…EESR) and 554-643 (VTSS…TEDV). A Phosphotyrosine modification is found at tyrosine 484. The segment covering 555 to 569 (TSSSSLPSFPSTLSW) has biased composition (low complexity). A phosphoserine mark is found at serine 559, serine 562, and serine 570. Residues 570–583 (SRDESARRASRLEK) show a composition bias toward basic and acidic residues. Polar residues predominate over residues 584–597 (QNSTPESDYDNTPN). Threonine 587 is subject to Phosphothreonine. The residue at position 614 (serine 614) is a Phosphoserine.

In terms of assembly, may form heterooligomers with GIT1. Directly interacts with protein Piccolo/PCLO. Interacts with PPFIA1 and PPFIA2. Interacts with ARHGEF7. Identified in a complex with ARHGEF6 and BIN2. Interacts with PAK3. Interacts with PXN/paxillin. Interacts with TGFB1I1. Forms a complex with EFNB1 and GRB4/NCK2.

Functionally, GTPase-activating protein for ADP ribosylation factor family members, including ARF1. The sequence is that of ARF GTPase-activating protein GIT2 (GIT2) from Homo sapiens (Human).